The sequence spans 110 residues: Large ribosomal subunit protein uL22 (110 aa).

The protein belongs to the universal ribosomal protein uL22 family. Part of the 50S ribosomal subunit.

Its function is as follows. This protein binds specifically to 23S rRNA; its binding is stimulated by other ribosomal proteins, e.g. L4, L17, and L20. It is important during the early stages of 50S assembly. It makes multiple contacts with different domains of the 23S rRNA in the assembled 50S subunit and ribosome. Functionally, the globular domain of the protein is located near the polypeptide exit tunnel on the outside of the subunit, while an extended beta-hairpin is found that lines the wall of the exit tunnel in the center of the 70S ribosome. The sequence is that of Large ribosomal subunit protein uL22 from Klebsiella pneumoniae (strain 342).